The chain runs to 427 residues: Phosphoribosylamine--glycine ligase (427 aa).

The ATP-grasp domain maps to 109-313 (RNLMAEYKIE…LAEVVTGITE (205 aa)). 136-191 (VRDHDGDLAVKPIGLTGGKGVRIMGEQVDRAGAIEYIREINGGVVLEERLTGEEFT) is a binding site for ATP. Residues Q271, E283, and N285 each contribute to the Mg(2+) site. Positions 271, 283, and 285 each coordinate Mn(2+).

Belongs to the GARS family. It depends on Mg(2+) as a cofactor. Mn(2+) serves as cofactor.

It carries out the reaction 5-phospho-beta-D-ribosylamine + glycine + ATP = N(1)-(5-phospho-beta-D-ribosyl)glycinamide + ADP + phosphate + H(+). It functions in the pathway purine metabolism; IMP biosynthesis via de novo pathway; N(1)-(5-phospho-D-ribosyl)glycinamide from 5-phospho-alpha-D-ribose 1-diphosphate: step 2/2. This is Phosphoribosylamine--glycine ligase from Methanoregula boonei (strain DSM 21154 / JCM 14090 / 6A8).